Consider the following 205-residue polypeptide: S-crystallin SL11 (205 aa).

A GST N-terminal domain is found at 2-80 (PSYTLYYFNG…YLAREFGFYG (79 aa)). The GST C-terminal domain maps to 82 to 205 (NNMDMFKVDC…YIKKRNNTAF (124 aa)).

Belongs to the GST superfamily. Lens.

Its function is as follows. S-crystallins are structural components of squids and octopi eye lens. Contains relatively little if any GST activity. This Nototodarus sloanii (Wellington flying squid) protein is S-crystallin SL11.